The primary structure comprises 173 residues: Superoxide dismutase [Cu-Zn] 2 (173 aa).

A signal peptide spans 1–19 (MKRLSLAMVTLLACAGAQA). H67, H69, and H92 together coordinate Cu cation. C74 and C169 form a disulfide bridge. H92, H101, H109, and D112 together coordinate Zn(2+). Residue H147 participates in Cu cation binding.

Belongs to the Cu-Zn superoxide dismutase family. Monomer. Requires Cu cation as cofactor. It depends on Zn(2+) as a cofactor.

The protein localises to the periplasm. The enzyme catalyses 2 superoxide + 2 H(+) = H2O2 + O2. In terms of biological role, destroys radicals which are normally produced within the cells and which are toxic to biological systems. The polypeptide is Superoxide dismutase [Cu-Zn] 2 (sodC) (Salmonella typhimurium (strain LT2 / SGSC1412 / ATCC 700720)).